The following is a 352-amino-acid chain: S-adenosylmethionine:tRNA ribosyltransferase-isomerase (352 aa).

This sequence belongs to the QueA family. Monomer.

The protein resides in the cytoplasm. It carries out the reaction 7-aminomethyl-7-carbaguanosine(34) in tRNA + S-adenosyl-L-methionine = epoxyqueuosine(34) in tRNA + adenine + L-methionine + 2 H(+). It functions in the pathway tRNA modification; tRNA-queuosine biosynthesis. Functionally, transfers and isomerizes the ribose moiety from AdoMet to the 7-aminomethyl group of 7-deazaguanine (preQ1-tRNA) to give epoxyqueuosine (oQ-tRNA). In Cupriavidus necator (strain ATCC 17699 / DSM 428 / KCTC 22496 / NCIMB 10442 / H16 / Stanier 337) (Ralstonia eutropha), this protein is S-adenosylmethionine:tRNA ribosyltransferase-isomerase.